We begin with the raw amino-acid sequence, 351 residues long: L-threonine 3-dehydrogenase (351 aa).

Cys39 is a binding site for Zn(2+). Active-site charge relay system residues include Thr41 and His44. His64, Glu65, Cys94, Cys97, Cys100, and Cys108 together coordinate Zn(2+). NAD(+) contacts are provided by residues Ile176, Asp196, Arg201, 271–273 (LGI), and 295–296 (IY).

The protein belongs to the zinc-containing alcohol dehydrogenase family. As to quaternary structure, homotetramer. Zn(2+) is required as a cofactor.

The protein localises to the cytoplasm. It catalyses the reaction L-threonine + NAD(+) = (2S)-2-amino-3-oxobutanoate + NADH + H(+). It participates in amino-acid degradation; L-threonine degradation via oxydo-reductase pathway; glycine from L-threonine: step 1/2. In terms of biological role, catalyzes the NAD(+)-dependent oxidation of L-threonine to 2-amino-3-ketobutyrate. This chain is L-threonine 3-dehydrogenase, found in Francisella tularensis subsp. mediasiatica (strain FSC147).